A 63-amino-acid polypeptide reads, in one-letter code: Sarcotoxin-1B (63 aa).

An N-terminal signal peptide occupies residues 1–23 (MNFNKVFIFVALILAVFAGQSQA). Arg-62 carries the post-translational modification Arginine amide.

Belongs to the cecropin family.

Its subcellular location is the secreted. Functionally, sarcotoxins, which are potent bactericidal proteins, are produced in response to injury. They are cytotoxic to both Gram-positive and Gram-negative bacteria. This is Sarcotoxin-1B from Sarcophaga peregrina (Flesh fly).